The following is a 728-amino-acid chain: Elongation factor 2 (728 aa).

Residues 19 to 261 form the tr-type G domain; that stretch reads EQIRNIAIAA…MVAEHFPNPI (243 aa). Residues 28–35, 94–98, and 148–151 each bind GTP; these read AHVDHGKT, DTPGH, and NKVD. Histidine 596 bears the Diphthamide mark.

Belongs to the TRAFAC class translation factor GTPase superfamily. Classic translation factor GTPase family. EF-G/EF-2 subfamily.

Its subcellular location is the cytoplasm. Its function is as follows. Catalyzes the GTP-dependent ribosomal translocation step during translation elongation. During this step, the ribosome changes from the pre-translocational (PRE) to the post-translocational (POST) state as the newly formed A-site-bound peptidyl-tRNA and P-site-bound deacylated tRNA move to the P and E sites, respectively. Catalyzes the coordinated movement of the two tRNA molecules, the mRNA and conformational changes in the ribosome. This is Elongation factor 2 from Halobacterium salinarum (strain ATCC 29341 / DSM 671 / R1).